The primary structure comprises 258 residues: Snake venom serine protease BPA (258 aa).

The first 18 residues, 1-18, serve as a signal peptide directing secretion; sequence MVLIRVIANLLILQLSNA. A propeptide spanning residues 19–24 is cleaved from the precursor; it reads QKSSEL. One can recognise a Peptidase S1 domain in the interval 25–249; sequence VIGGDECNIT…YLPWIQSIIA (225 aa). 6 cysteine pairs are disulfide-bonded: C31–C163, C50–C66, C98–C256, C142–C210, C174–C189, and C200–C225. N-linked (GlcNAc...) asparagine glycosylation is found at N32 and N44. H65 serves as the catalytic Charge relay system. The N-linked (GlcNAc...) asparagine glycan is linked to N103. D110 acts as the Charge relay system in catalysis. N121 is a glycosylation site (N-linked (GlcNAc...) asparagine). S133 carries O-linked (GalNAc...) serine glycosylation. N-linked (GlcNAc...) asparagine glycans are attached at residues N154 and N170. The active-site Charge relay system is S204. 2 N-linked (GlcNAc...) asparagine glycosylation sites follow: N211 and N251. O-linked (GalNAc...) threonine glycosylation occurs at T255.

This sequence belongs to the peptidase S1 family. Snake venom subfamily. In terms of assembly, monomer. Post-translationally, N- and O-glycosylated. The glycosylation has a stabilizing effect on the protein. However, the removal of part of the carbohydrates enhances the proteolytic activity of the SVSP towards human and rat fibrinogen. As to expression, expressed by the venom gland.

Its subcellular location is the secreted. With respect to regulation, inhibited by diisopropylfluorophosphate (DFP), but not by SBTI, Antithrombin III/heparin and BPTI, probably due to steric hindrance caused by its huge carbohydrate moietie. Its function is as follows. Snake venom serine protease that has a potent and selective fibrinogenolytic activity. Preferentially cleaves the alpha-chain (FGA) of human and rat fibrinogen at Arg-|-Gly bonds, and slowly digests the beta-chain (FGB). In vivo, completely avoids thrombus formation induced in rat, decreases the fibrinogen plasma level and prolonges the recalcification time. Possesses esterolytic and amidolytic activities. This Bothrops jararaca (Jararaca) protein is Snake venom serine protease BPA.